A 96-amino-acid chain; its full sequence is UPF0235 protein Shewmr4_1190 (96 aa).

Belongs to the UPF0235 family.

The sequence is that of UPF0235 protein Shewmr4_1190 from Shewanella sp. (strain MR-4).